Reading from the N-terminus, the 354-residue chain is Histidinol-phosphate aminotransferase (354 aa).

N6-(pyridoxal phosphate)lysine is present on lysine 210.

It belongs to the class-II pyridoxal-phosphate-dependent aminotransferase family. Histidinol-phosphate aminotransferase subfamily. As to quaternary structure, homodimer. The cofactor is pyridoxal 5'-phosphate.

It carries out the reaction L-histidinol phosphate + 2-oxoglutarate = 3-(imidazol-4-yl)-2-oxopropyl phosphate + L-glutamate. Its pathway is amino-acid biosynthesis; L-histidine biosynthesis; L-histidine from 5-phospho-alpha-D-ribose 1-diphosphate: step 7/9. The polypeptide is Histidinol-phosphate aminotransferase (Clostridium botulinum (strain Okra / Type B1)).